A 300-amino-acid polypeptide reads, in one-letter code: Bifunctional protein FolD (300 aa).

Residues 169–171, S196, and I237 contribute to the NADP(+) site; that span reads GRG.

It belongs to the tetrahydrofolate dehydrogenase/cyclohydrolase family. In terms of assembly, homodimer.

It catalyses the reaction (6R)-5,10-methylene-5,6,7,8-tetrahydrofolate + NADP(+) = (6R)-5,10-methenyltetrahydrofolate + NADPH. It carries out the reaction (6R)-5,10-methenyltetrahydrofolate + H2O = (6R)-10-formyltetrahydrofolate + H(+). Its pathway is one-carbon metabolism; tetrahydrofolate interconversion. Catalyzes the oxidation of 5,10-methylenetetrahydrofolate to 5,10-methenyltetrahydrofolate and then the hydrolysis of 5,10-methenyltetrahydrofolate to 10-formyltetrahydrofolate. The sequence is that of Bifunctional protein FolD from Clavibacter sepedonicus (Clavibacter michiganensis subsp. sepedonicus).